The chain runs to 126 residues: Large ribosomal subunit protein uL22 (126 aa).

Belongs to the universal ribosomal protein uL22 family. As to quaternary structure, part of the 50S ribosomal subunit.

This protein binds specifically to 23S rRNA; its binding is stimulated by other ribosomal proteins, e.g. L4, L17, and L20. It is important during the early stages of 50S assembly. It makes multiple contacts with different domains of the 23S rRNA in the assembled 50S subunit and ribosome. Functionally, the globular domain of the protein is located near the polypeptide exit tunnel on the outside of the subunit, while an extended beta-hairpin is found that lines the wall of the exit tunnel in the center of the 70S ribosome. The polypeptide is Large ribosomal subunit protein uL22 (Maricaulis maris (strain MCS10) (Caulobacter maris)).